Here is a 159-residue protein sequence, read N- to C-terminus: Ribosomal RNA large subunit methyltransferase H (159 aa).

S-adenosyl-L-methionine-binding positions include leucine 76, glycine 108, and 127–132 (FSKMTF).

The protein belongs to the RNA methyltransferase RlmH family. As to quaternary structure, homodimer.

Its subcellular location is the cytoplasm. It catalyses the reaction pseudouridine(1915) in 23S rRNA + S-adenosyl-L-methionine = N(3)-methylpseudouridine(1915) in 23S rRNA + S-adenosyl-L-homocysteine + H(+). Specifically methylates the pseudouridine at position 1915 (m3Psi1915) in 23S rRNA. The sequence is that of Ribosomal RNA large subunit methyltransferase H from Staphylococcus carnosus (strain TM300).